The primary structure comprises 462 residues: Cell wall mannoprotein 1 (462 aa).

The signal sequence occupies residues 1-18 (MKFLSSLVVLGLSAQALA). Residue serine 313 participates in hexadecanoate binding. The segment at 346 to 429 (FAGTGPAPTT…SVPAAPTGGN (84 aa)) is disordered. Positions 347–366 (AGTGPAPTTSSTPEASTAPA) are enriched in low complexity. Positions 399–420 (VWPTSTTASPDVQPTITSSGTS) are enriched in polar residues.

It belongs to the cell wall mannoprotein 1 family. In terms of assembly, monomer. Mannoprotein, glycosylated.

Its subcellular location is the secreted. It localises to the cell wall. Functionally, constitutive protein of the cell wall. Binds fatty acids and may thus serve as a fatty acid transporter between P.marneffei and host cells during infection. Abundant antigen target of host humoral immune response. This chain is Cell wall mannoprotein 1, found in Talaromyces marneffei (Penicillium marneffei).